Consider the following 351-residue polypeptide: High-affinity nickel transport protein (351 aa).

Residues 1–19 are Cytoplasmic-facing; that stretch reads MFQLLAGVRMNSTGRPRAK. A helical transmembrane segment spans residues 20-40; sequence IILLYALLIAFNIGAWLCALA. Residues 41-51 are Periplasmic-facing; it reads AFRDHPVLLGT. The helical transmembrane segment at 52–72 threads the bilayer; it reads ALLAYGLGLRHAVDADHLAAI. Residues 73–94 are Cytoplasmic-facing; the sequence is DNVTRKLMQDGRRPITAGLWFS. The chain crosses the membrane as a helical span at residues 95–115; sequence LGHSSVVVLASVLIAVMATTL. The Periplasmic segment spans residues 116–128; sequence QERLDAFHEVGSV. Residues 129-149 traverse the membrane as a helical segment; that stretch reads IGTLASALFLFAIAAINLVIL. Residues 150 to 199 lie on the Cytoplasmic side of the membrane; that stretch reads RSAYRAFRRVRRGGIYVEEDFDLLFGNRGFLARIFRPLFRFITRSWHMYP. Residues 200 to 220 form a helical membrane-spanning segment; the sequence is LGMLFALGFDTATEVALLGIS. The Periplasmic segment spans residues 221-243; the sequence is TMEASRGVPIWSILVFPALFTAG. The chain crosses the membrane as a helical span at residues 244-264; it reads MALIDTIDSILMCGAYAWAYA. Residues 265-269 lie on the Cytoplasmic side of the membrane; the sequence is KPVRK. A helical transmembrane segment spans residues 270–290; it reads LYYNMTITFVSAIVALIVGGI. Over 291–316 the chain is Periplasmic; that stretch reads ETLGLLADKFMLKGVFWNAVGALNEN. A helical transmembrane segment spans residues 317 to 337; sequence FCQLGFVIIGIFTVCWVVSIV. The Cytoplasmic portion of the chain corresponds to 338–351; the sequence is VYRLRRYDDSEVRA.

The protein belongs to the NiCoT transporter (TC 2.A.52) family.

The protein resides in the cell inner membrane. In terms of biological role, high-affinity nickel transporter responsible for nickel uptake. Necessary for high levels of activity of hydrogenase and urease. Does not transport cobalt. The chain is High-affinity nickel transport protein (hoxN) from Cupriavidus necator (strain ATCC 17699 / DSM 428 / KCTC 22496 / NCIMB 10442 / H16 / Stanier 337) (Ralstonia eutropha).